The sequence spans 355 residues: Fructose-bisphosphate aldolase, cytoplasmic isozyme (355 aa).

Substrate is bound by residues Arg-52 and Lys-142. The Proton acceptor role is filled by Glu-183. Catalysis depends on Lys-225, which acts as the Schiff-base intermediate with dihydroxyacetone-P.

The protein belongs to the class I fructose-bisphosphate aldolase family.

It is found in the cytoplasm. The enzyme catalyses beta-D-fructose 1,6-bisphosphate = D-glyceraldehyde 3-phosphate + dihydroxyacetone phosphate. It participates in carbohydrate degradation; glycolysis; D-glyceraldehyde 3-phosphate and glycerone phosphate from D-glucose: step 4/4. This chain is Fructose-bisphosphate aldolase, cytoplasmic isozyme, found in Zea mays (Maize).